Consider the following 576-residue polypeptide: Deformed epidermal autoregulatory factor 1 (576 aa).

Disordered regions lie at residues 52–76 (VTSS…GGGN), 189–215 (AGGA…NPST), and 309–362 (ESAS…SGSG). 2 stretches are compositionally biased toward gly residues: residues 61 to 76 (GSGG…GGGN) and 191 to 207 (GASG…GGSS). An SAND domain is found at 210–291 (SENPSTQHNE…QSLIDEGTLT (82 aa)). Residues 324 to 340 (RKRNQTDLDMESGPKRK) carry the Nuclear localization signal motif. Positions 345–362 (HSNNNNSNTNNNNTSGSG) are enriched in low complexity. Zn(2+) is bound by residues cysteine 521, cysteine 524, cysteine 532, cysteine 535, cysteine 541, cysteine 545, histidine 553, and cysteine 557. The segment at 521–557 (CANCNREALAECSLCRKTPYCSEFCQRKDWNAHQVEC) adopts an MYND-type zinc-finger fold.

Its subcellular location is the nucleus. Functionally, transcription factor that binds the homeotic Deformed (Dfd) response element. High affinity binding sites contain at least 1 TTCG motif surrounded by additional TCG sequences. May be involved in the selective action of Dfd on these sites without binding directly to the Dfd protein. Requirement of DEAF1 activity may be a common feature of enhancers targeted by Dfd. The protein is Deformed epidermal autoregulatory factor 1 (Deaf1) of Drosophila melanogaster (Fruit fly).